Reading from the N-terminus, the 443-residue chain is ATP-dependent protease ATPase subunit HslU (443 aa).

Residues Ile18, 60–65 (GVGKTE), Asp256, Glu321, and Arg393 contribute to the ATP site.

It belongs to the ClpX chaperone family. HslU subfamily. As to quaternary structure, a double ring-shaped homohexamer of HslV is capped on each side by a ring-shaped HslU homohexamer. The assembly of the HslU/HslV complex is dependent on binding of ATP.

The protein resides in the cytoplasm. ATPase subunit of a proteasome-like degradation complex; this subunit has chaperone activity. The binding of ATP and its subsequent hydrolysis by HslU are essential for unfolding of protein substrates subsequently hydrolyzed by HslV. HslU recognizes the N-terminal part of its protein substrates and unfolds these before they are guided to HslV for hydrolysis. This Pasteurella multocida (strain Pm70) protein is ATP-dependent protease ATPase subunit HslU.